Reading from the N-terminus, the 499-residue chain is Cytochrome P450 monooxygenase notH' (499 aa).

The chain crosses the membrane as a helical span at residues 11–31 (LGLEPAGWALALLTSSIIYLF). Residues N296 and N427 are each glycosylated (N-linked (GlcNAc...) asparagine). Residue C440 participates in heme binding.

The protein belongs to the cytochrome P450 family. It depends on heme as a cofactor.

It localises to the membrane. It functions in the pathway alkaloid biosynthesis. In terms of biological role, cytochrome P450 monooxygenase; part of the gene cluster that mediates the biosynthesis of notoamide, a fungal indole alkaloid that belongs to a family of natural products containing a characteristic bicyclo[2.2.2]diazaoctane core. The first step of notoamide biosynthesis involves coupling of L-proline and L-tryptophan by the bimodular NRPS notE', to produce cyclo-L-tryptophan-L-proline called brevianamide F. The reverse prenyltransferase notF' then acts as a deoxybrevianamide E synthase and converts brevianamide F to deoxybrevianamide E via reverse prenylation at C-2 of the indole ring leading to the bicyclo[2.2.2]diazaoctane core. Deoxybrevianamide E is further hydroxylated at C-6 of the indole ring, likely catalyzed by the cytochrome P450 monooxygenase notG', to yield 6-hydroxy-deoxybrevianamide E. 6-hydroxy-deoxybrevianamide E is a specific substrate of the prenyltransferase notC' for normal prenylation at C-7 to produce 6-hydroxy-7-prenyl-deoxybrevianamide, also called notoamide S. As the proposed pivotal branching point in notoamide biosynthesis, notoamide S can be diverted to notoamide E through an oxidative pyran ring closure putatively catalyzed by either notH' cytochrome P450 monooxygenase or the notD' FAD-linked oxidoreductase. This step would be followed by an indole 2,3-epoxidation-initiated pinacol-like rearrangement catalyzed by the notB' FAD-dependent monooxygenase leading to the formation of notoamide C and notoamide D. On the other hand notoamide S is converted to notoamide T by notH' (or notD'), a bifunctional oxidase that also functions as the intramolecular Diels-Alderase responsible for generation of (-)-notoamide T. To generate antipodal (+)-notoaminide T, notH (or notD) in Aspergillus strain MF297-2 is expected to catalyze a Diels-Alder reaction leading to the opposite stereochemistry. The remaining oxidoreductase notD' (or notH') likely catalyzes the oxidative pyran ring formation to yield (-)-stephacidin A. The FAD-dependent monooxygenase notI' is highly similar to notB' and is predicted to catalyze a similar conversion from (-)-stephacidin A to (+)-notoamide B via the 2,3-epoxidation of (-)-stephacidin A followed by a pinacol-type rearrangement. Finally, it remains unclear which enzyme could be responsible for the final hydroxylation steps leading to notoamide A and sclerotiamide. In Aspergillus versicolor, this protein is Cytochrome P450 monooxygenase notH'.